We begin with the raw amino-acid sequence, 533 residues long: Probable lipid II flippase MurJ (533 aa).

Transmembrane regions (helical) follow at residues 25–45 (ETLMAAALGTGPMADVFYAAF), 90–110 (VLFSVLLLITIVMELAMPLLV), 131–151 (LAAVMFPYLMSMSLTAMMSGM), 158–178 (FFAAAVAPIFLNLVMISALFY), 192–212 (YLSWSVLVAGVLQLAVVYIGV), 233–253 (LLLLAIPAAITGGVTQINLVI), 274–294 (IYQLPLGVVGVAVGIVLLPEL), 316–336 (FVLFLTLPAAVALWLLSDDII), 350–370 (TTLVGSILAIFGLGLPAFVLI), 389–409 (YTAIAVAVNSALSILLFPVLA), 412–432 (GIALAEAVAGWLNAVQLFVTL), 449–469 (AMLLVSSAVMGGVIVYLSHRW), and 484–504 (GVLGLLILIAMAVYFIVAFLI).

It belongs to the MurJ/MviN family.

Its subcellular location is the cell inner membrane. Its pathway is cell wall biogenesis; peptidoglycan biosynthesis. Functionally, involved in peptidoglycan biosynthesis. Transports lipid-linked peptidoglycan precursors from the inner to the outer leaflet of the cytoplasmic membrane. This Rhizobium tropici protein is Probable lipid II flippase MurJ.